The primary structure comprises 600 residues: MPQRQPPGTEEGWYILHDFRSIDWDAWRDAPDRERERALETGTDYLQAHVDLKDAEEGASAVFSILGHKADFMVLHLRPTLDHLDHAERRFESTALAEFTEQSSSYVSVTEVSGYMHEELTDGLDDLEDEGMRNYMKQRIYPELPDADHVCFYPMSKRRGPDHNWYDLPFDERREYMSNHGDVGRQYADKVSQIIAGSIGFDDYEWGITLFADDPTDIKDLLYEMRFDPSSSKFAEFGPFYIGQQFEPSELSSLFAAEPLTSETGHGGADSQTSSESSGGRPSTDPSHDEIAAEDLESRLGRFGVDLEEYPAAGYALCFESSADAEAVSDEVDGLRENFDHYDTHVMTTVRAEGGETAAISLWKNERAATTASGFLGDLPGAAEGVGAPLDGSGDAATHGTDEDDEIRGELADADIYAGQPHGEDVYALVLYSEADPDELRDELGALAEHFERYDTHIKSAVYDAEVGGDRTAVVSLWDEKDAADTAAEHLSDLPDIVARAGEDEESGFGTMGMFYTVKPDYREDFVETFDEVGGLLADMDGHLETQLMVNEDDENDMFIASQWRDKEAAMAFFRSDAFRETVEYGREVLADRPRHVFLA.

Heme is bound at residue histidine 180. Residues 261–289 (TSETGHGGADSQTSSESSGGRPSTDPSHD) are disordered. Positions 270-285 (DSQTSSESSGGRPSTD) are enriched in polar residues. The region spanning 510 to 598 (GTMGMFYTVK…VLADRPRHVF (89 aa)) is the ABM domain.

The protein in the N-terminal section; belongs to the ChdC family.

The polypeptide is Putative heme-binding protein NP_2262A (Natronomonas pharaonis (strain ATCC 35678 / DSM 2160 / CIP 103997 / JCM 8858 / NBRC 14720 / NCIMB 2260 / Gabara) (Halobacterium pharaonis)).